A 55-amino-acid chain; its full sequence is MAKEKRETIRLFSSSKNGHFYSTTKNKRTSSEKMTLKKFDPFARKHVIYIESKNS.

Belongs to the bacterial ribosomal protein bL33 family.

The polypeptide is Large ribosomal subunit protein bL33 (Blochmanniella pennsylvanica (strain BPEN)).